Consider the following 356-residue polypeptide: DNA polymerase IV (356 aa).

Positions 6–187 constitute a UmuC domain; it reads IIHIDMDYFF…LDIGDFPGVG (182 aa). Residues Asp10 and Asp105 each coordinate Mg(2+). Glu106 is a catalytic residue.

This sequence belongs to the DNA polymerase type-Y family. Monomer. The cofactor is Mg(2+).

The protein resides in the cytoplasm. The enzyme catalyses DNA(n) + a 2'-deoxyribonucleoside 5'-triphosphate = DNA(n+1) + diphosphate. In terms of biological role, poorly processive, error-prone DNA polymerase involved in untargeted mutagenesis. Copies undamaged DNA at stalled replication forks, which arise in vivo from mismatched or misaligned primer ends. These misaligned primers can be extended by PolIV. Exhibits no 3'-5' exonuclease (proofreading) activity. May be involved in translesional synthesis, in conjunction with the beta clamp from PolIII. This is DNA polymerase IV from Staphylococcus aureus (strain COL).